Reading from the N-terminus, the 58-residue chain is Small ribosomal subunit protein bS21 (58 aa).

The disordered stretch occupies residues 27 to 58 (GVLSEARKHEHYEKPSVKRKKKSEAARKRKFK). The segment covering 31–42 (EARKHEHYEKPS) has biased composition (basic and acidic residues). The segment covering 43–58 (VKRKKKSEAARKRKFK) has biased composition (basic residues).

It belongs to the bacterial ribosomal protein bS21 family.

The polypeptide is Small ribosomal subunit protein bS21 (Desulfitobacterium hafniense (strain DSM 10664 / DCB-2)).